The primary structure comprises 101 residues: Small ribosomal subunit protein uS14 (101 aa).

Belongs to the universal ribosomal protein uS14 family. As to quaternary structure, part of the 30S ribosomal subunit. Contacts proteins S3 and S10.

Its function is as follows. Binds 16S rRNA, required for the assembly of 30S particles and may also be responsible for determining the conformation of the 16S rRNA at the A site. This chain is Small ribosomal subunit protein uS14, found in Aeromonas hydrophila subsp. hydrophila (strain ATCC 7966 / DSM 30187 / BCRC 13018 / CCUG 14551 / JCM 1027 / KCTC 2358 / NCIMB 9240 / NCTC 8049).